Consider the following 254-residue polypeptide: 3-deoxy-manno-octulosonate cytidylyltransferase (254 aa).

This sequence belongs to the KdsB family.

The protein localises to the cytoplasm. It carries out the reaction 3-deoxy-alpha-D-manno-oct-2-ulosonate + CTP = CMP-3-deoxy-beta-D-manno-octulosonate + diphosphate. Its pathway is nucleotide-sugar biosynthesis; CMP-3-deoxy-D-manno-octulosonate biosynthesis; CMP-3-deoxy-D-manno-octulosonate from 3-deoxy-D-manno-octulosonate and CTP: step 1/1. The protein operates within bacterial outer membrane biogenesis; lipopolysaccharide biosynthesis. Functionally, activates KDO (a required 8-carbon sugar) for incorporation into bacterial lipopolysaccharide in Gram-negative bacteria. This is 3-deoxy-manno-octulosonate cytidylyltransferase from Pseudoalteromonas atlantica (strain T6c / ATCC BAA-1087).